A 286-amino-acid polypeptide reads, in one-letter code: Tungstate-binding protein TupA (286 aa).

Positions 1–20 (MKRLLSIITAVMMLALALTG) are cleaved as a signal peptide. Residue Cys21 is the site of N-palmitoyl cysteine attachment. A lipid anchor (S-diacylglycerol cysteine) is attached at Cys21.

Monomer. The complex is composed of two ATP-binding proteins (TupC), two transmembrane proteins (TupB) and a solute-binding protein (TupA).

Its subcellular location is the cell membrane. Its function is as follows. Part of an ABC transporter complex involved in tungstate uptake. Specifically binds tungstate. The chain is Tungstate-binding protein TupA from Peptoclostridium acidaminophilum (Eubacterium acidaminophilum).